The following is a 306-amino-acid chain: Tyrosine recombinase EUBREC_2677 (306 aa).

The Core-binding (CB) domain maps to 2 to 84; it reads NNLQTHISSY…SIKAFFHYLE (83 aa). The Tyr recombinase domain occupies 106–296; that stretch reads ILPKTIPLYI…AVSKQKDILI (191 aa). Catalysis depends on residues arginine 155, lysine 179, histidine 248, arginine 251, and histidine 274. Tyrosine 283 (O-(3'-phospho-DNA)-tyrosine intermediate) is an active-site residue.

The protein belongs to the 'phage' integrase family.

It localises to the cytoplasm. In terms of biological role, site-specific tyrosine recombinase, which acts by catalyzing the cutting and rejoining of the recombining DNA molecules. The protein is Tyrosine recombinase EUBREC_2677 of Agathobacter rectalis (strain ATCC 33656 / DSM 3377 / JCM 17463 / KCTC 5835 / VPI 0990) (Eubacterium rectale).